A 399-amino-acid polypeptide reads, in one-letter code: Long-chain primary alcohol dehydrogenase AdhA (399 aa).

This sequence belongs to the iron-containing alcohol dehydrogenase family. In terms of assembly, homotetramer. Requires Zn(2+) as cofactor.

It carries out the reaction a primary alcohol + NADP(+) = an aldehyde + NADPH + H(+). Alcohol dehydrogenase active against primary long-chain alcohols. Pentan-1-ol is the optimum substrate in vitro, but also shows efficient dehydrogenase activity on propanol, hexanol, and ethanol. The polypeptide is Long-chain primary alcohol dehydrogenase AdhA (adhA) (Thermoanaerobacter ethanolicus (Clostridium thermohydrosulfuricum)).